The primary structure comprises 224 residues: Pro-thyrotropin-releasing hormone-B (224 aa).

Residues 1-15 (MMFLWWLLLLGTAIS) form the signal peptide. The residue at position 75 (glutamine 75) is a Pyrrolidone carboxylic acid. Proline 77 carries the proline amide modification. The segment covering 86 to 101 (EKRQHPGKRDLEDLQL) has biased composition (basic and acidic residues). Disordered stretches follow at residues 86–131 (EKRQ…DWSR) and 150–212 (RQHP…NSGN). Glutamine 89 is modified (pyrrolidone carboxylic acid). At proline 91 the chain carries Proline amide. Glutamine 105 is modified (pyrrolidone carboxylic acid). Proline 107 carries the post-translational modification Proline amide. A compositionally biased stretch (basic and acidic residues) spans 110 to 129 (RYLEDMEKRQHPGKREEGDW). Glutamine 119 is subject to Pyrrolidone carboxylic acid. At proline 121 the chain carries Proline amide. A Pyrrolidone carboxylic acid modification is found at glutamine 151. Proline 153 is modified (proline amide). The residue at position 166 (glutamine 166) is a Pyrrolidone carboxylic acid. At proline 168 the chain carries Proline amide. The segment covering 182–199 (ENSKEVGKRQHPGKRYDP) has biased composition (basic and acidic residues). Pyrrolidone carboxylic acid is present on glutamine 191. Proline 193 is modified (proline amide).

Belongs to the TRH family.

The protein localises to the secreted. The protein is Pro-thyrotropin-releasing hormone-B (trh-b) of Xenopus laevis (African clawed frog).